The following is a 345-amino-acid chain: Uroporphyrinogen decarboxylase (345 aa).

Residues 27–31 (RQAGR), phenylalanine 46, aspartate 76, tyrosine 152, serine 207, and histidine 321 each bind substrate.

The protein belongs to the uroporphyrinogen decarboxylase family. As to quaternary structure, homodimer.

It is found in the cytoplasm. It carries out the reaction uroporphyrinogen III + 4 H(+) = coproporphyrinogen III + 4 CO2. The protein operates within porphyrin-containing compound metabolism; protoporphyrin-IX biosynthesis; coproporphyrinogen-III from 5-aminolevulinate: step 4/4. Functionally, catalyzes the decarboxylation of four acetate groups of uroporphyrinogen-III to yield coproporphyrinogen-III. The chain is Uroporphyrinogen decarboxylase from Staphylococcus aureus (strain USA300 / TCH1516).